The following is a 409-amino-acid chain: Elongation factor Tu (409 aa).

Residues 10 to 214 (KPHVNVGTIG…AVDSYIPTPE (205 aa)) form the tr-type G domain. The G1 stretch occupies residues 19-26 (GHVDHGKT). 19–26 (GHVDHGKT) is a binding site for GTP. Thr26 provides a ligand contact to Mg(2+). The segment at 60-64 (GITIN) is G2. The G3 stretch occupies residues 81 to 84 (DCPG). GTP contacts are provided by residues 81 to 85 (DCPGH) and 136 to 139 (NKVD). The tract at residues 136–139 (NKVD) is G4. The segment at 174–176 (SAL) is G5.

This sequence belongs to the TRAFAC class translation factor GTPase superfamily. Classic translation factor GTPase family. EF-Tu/EF-1A subfamily. As to quaternary structure, monomer.

The protein resides in the cytoplasm. The catalysed reaction is GTP + H2O = GDP + phosphate + H(+). GTP hydrolase that promotes the GTP-dependent binding of aminoacyl-tRNA to the A-site of ribosomes during protein biosynthesis. This Synechococcus sp. (strain JA-3-3Ab) (Cyanobacteria bacterium Yellowstone A-Prime) protein is Elongation factor Tu.